The primary structure comprises 197 residues: MLPKKIDYIKIALIVVGIIALFLPWLTISASTINIKTDEGIHLSVNLAPFRVSSDIKSDTNNIFVEMMMPYVKQYFDMAVKEKMSTFMMIFGIIPIILYIASIFVDKKAVVVGAGIAGITCASIFVVLFTVGLNSSDSGLALTGGKEVTPIDLITGVVNEKSSYLSKDIIKIQVGTGWYLTMIIGLALIAYPFIRKV.

4 helical membrane-spanning segments follow: residues 11–31, 85–105, 109–129, and 174–194; these read IALI…ISAS, STFM…SIFV, AVVV…VVLF, and VGTG…YPFI.

Its subcellular location is the cell membrane. This is an uncharacterized protein from Methanocaldococcus jannaschii (strain ATCC 43067 / DSM 2661 / JAL-1 / JCM 10045 / NBRC 100440) (Methanococcus jannaschii).